Reading from the N-terminus, the 241-residue chain is MLVLFVATWSDLGLCKKRPKPGGWNTGGSRYPGQGSPGGNRYPPQGGGGWGQPHGGGWGQPHGGGWGQPHGGGWGQPHGGGWGQGGGTHNQWHKPNKPKTSMKHMAGAAAAGAVVGGLGGYMLGSAMSRPLIHFGNDYEDRYYRENMYRYPNQVYYRPVDQYSNQNNFVHDCVNITIKQHTVTTTTKGENFTETDVKMMERVVEQMCITQYEKESQAYYQRGSSMVLFSSPPVILLISFLI.

The N-terminal stretch at 1-15 (MLVLFVATWSDLGLC) is a signal peptide. Positions 16–31 (KKRPKPGGWNTGGSRY) are interaction with ADGRG6. The interval 16–223 (KKRPKPGGWN…ESQAYYQRGS (208 aa)) is interaction with GRB2, ERI3 and SYN1. Positions 18–101 (RPKPGGWNTG…WHKPNKPKTS (84 aa)) are disordered. Tandem repeats lie at residues 44–52 (PQGGGGWGQ), 53–60 (PHGGGWGQ), 61–68 (PHGGGWGQ), 69–76 (PHGGGWGQ), and 77–84 (PHGGGWGQ). The segment at 44 to 84 (PQGGGGWGQPHGGGWGQPHGGGWGQPHGGGWGQPHGGGWGQ) is 5 X 8 AA tandem repeats of P-H-G-G-G-W-G-Q. The span at 45 to 88 (QGGGGWGQPHGGGWGQPHGGGWGQPHGGGWGQPHGGGWGQGGGT) shows a compositional bias: gly residues. Positions 54, 55, 56, 62, 63, 64, 70, 71, 72, 78, 79, and 80 each coordinate Cu(2+). Positions 91–101 (QWHKPNKPKTS) are enriched in basic residues. Cys-172 and Cys-207 are oxidised to a cystine. N-linked (GlcNAc...) asparagine glycans are attached at residues Asn-174 and Asn-190. A lipid anchor (GPI-anchor amidated serine) is attached at Ser-223. Residues 224-241 (SMVLFSSPPVILLISFLI) constitute a propeptide, removed in mature form.

It belongs to the prion family. As to quaternary structure, monomer and homodimer. Has a tendency to aggregate into amyloid fibrils containing a cross-beta spine, formed by a steric zipper of superposed beta-strands. Soluble oligomers may represent an intermediate stage on the path to fibril formation. Copper binding may promote oligomerization. Interacts with GRB2, APP, ERI3/PRNPIP and SYN1. Mislocalized cytosolically exposed PrP interacts with MGRN1; this interaction alters MGRN1 subcellular location and causes lysosomal enlargement. Interacts with APP. Interacts with KIAA1191. Interacts with ADGRG6.

The protein resides in the cell membrane. The protein localises to the golgi apparatus. Its primary physiological function is unclear. May play a role in neuronal development and synaptic plasticity. May be required for neuronal myelin sheath maintenance. May promote myelin homeostasis through acting as an agonist for ADGRG6 receptor. May play a role in iron uptake and iron homeostasis. Soluble oligomers are toxic to cultured neuroblastoma cells and induce apoptosis (in vitro). Association with GPC1 (via its heparan sulfate chains) targets PRNP to lipid rafts. Also provides Cu(2+) or Zn(2+) for the ascorbate-mediated GPC1 deaminase degradation of its heparan sulfate side chains. This chain is Major prion protein (PRNP), found in Mandrillus sphinx (Mandrill).